The primary structure comprises 236 residues: Flagellar L-ring protein (236 aa).

A signal peptide spans 1-16 (MRMRITAILAAGLLAG). The N-palmitoyl cysteine moiety is linked to residue C17. C17 is lipidated: S-diacylglycerol cysteine. The disordered stretch occupies residues 96-143 (ENETDRSRKNSSGFNLGASGESQTSDFAWSGDLEYGSNTKTEGDGKTE). Polar residues predominate over residues 105-122 (NSSGFNLGASGESQTSDF).

This sequence belongs to the FlgH family. As to quaternary structure, the basal body constitutes a major portion of the flagellar organelle and consists of four rings (L,P,S, and M) mounted on a central rod.

It is found in the cell outer membrane. The protein localises to the bacterial flagellum basal body. Functionally, assembles around the rod to form the L-ring and probably protects the motor/basal body from shearing forces during rotation. This is Flagellar L-ring protein from Sinorhizobium medicae (strain WSM419) (Ensifer medicae).